Reading from the N-terminus, the 427-residue chain is Trigger factor (427 aa).

The PPIase FKBP-type domain maps to 163–248; it reads GDTVVIDFVG…VNEVKAKELP (86 aa).

The protein belongs to the FKBP-type PPIase family. Tig subfamily.

The protein localises to the cytoplasm. It catalyses the reaction [protein]-peptidylproline (omega=180) = [protein]-peptidylproline (omega=0). Its function is as follows. Involved in protein export. Acts as a chaperone by maintaining the newly synthesized protein in an open conformation. Functions as a peptidyl-prolyl cis-trans isomerase. This is Trigger factor from Lactococcus lactis subsp. cremoris (strain MG1363).